A 305-amino-acid polypeptide reads, in one-letter code: Sulfate adenylyltransferase subunit 2 (305 aa).

The disordered stretch occupies residues 283 to 305; it reads RQGRVIDHDQSASMEKKKQEGYF.

It belongs to the PAPS reductase family. CysD subfamily. Heterodimer composed of CysD, the smaller subunit, and CysN.

It catalyses the reaction sulfate + ATP + H(+) = adenosine 5'-phosphosulfate + diphosphate. The protein operates within sulfur metabolism; hydrogen sulfide biosynthesis; sulfite from sulfate: step 1/3. In terms of biological role, with CysN forms the ATP sulfurylase (ATPS) that catalyzes the adenylation of sulfate producing adenosine 5'-phosphosulfate (APS) and diphosphate, the first enzymatic step in sulfur assimilation pathway. APS synthesis involves the formation of a high-energy phosphoric-sulfuric acid anhydride bond driven by GTP hydrolysis by CysN coupled to ATP hydrolysis by CysD. This is Sulfate adenylyltransferase subunit 2 from Caulobacter sp. (strain K31).